The sequence spans 341 residues: Glycerol-3-phosphate dehydrogenase [NAD(P)+] 1 (341 aa).

Residues Ser11, Trp12, Arg32, Arg33, and Lys106 each coordinate NADPH. Residues Lys106, Gly137, and Ser139 each coordinate sn-glycerol 3-phosphate. Ala141 contributes to the NADPH binding site. Residues Lys192, Asp245, Ser255, Arg256, and Asn257 each contribute to the sn-glycerol 3-phosphate site. Catalysis depends on Lys192, which acts as the Proton acceptor. Residue Arg256 participates in NADPH binding. Residues Val280 and Glu282 each contribute to the NADPH site.

The protein belongs to the NAD-dependent glycerol-3-phosphate dehydrogenase family.

The protein localises to the cytoplasm. The enzyme catalyses sn-glycerol 3-phosphate + NAD(+) = dihydroxyacetone phosphate + NADH + H(+). It catalyses the reaction sn-glycerol 3-phosphate + NADP(+) = dihydroxyacetone phosphate + NADPH + H(+). Its pathway is membrane lipid metabolism; glycerophospholipid metabolism. Catalyzes the reduction of the glycolytic intermediate dihydroxyacetone phosphate (DHAP) to sn-glycerol 3-phosphate (G3P), the key precursor for phospholipid synthesis. This Salinibacter ruber (strain DSM 13855 / M31) protein is Glycerol-3-phosphate dehydrogenase [NAD(P)+] 1.